Here is a 638-residue protein sequence, read N- to C-terminus: Threonine--tRNA ligase (638 aa).

In terms of domain architecture, TGS spans 1–61; the sequence is MPIITLPDGS…NSDSKVVIIT (61 aa). Positions 242–533 are catalytic; it reads DHRKLGKKHS…LIEQYEAKFP (292 aa). Zn(2+) contacts are provided by Cys-333, His-384, and His-510.

The protein belongs to the class-II aminoacyl-tRNA synthetase family. Homodimer. It depends on Zn(2+) as a cofactor.

It localises to the cytoplasm. It catalyses the reaction tRNA(Thr) + L-threonine + ATP = L-threonyl-tRNA(Thr) + AMP + diphosphate + H(+). Its function is as follows. Catalyzes the attachment of threonine to tRNA(Thr) in a two-step reaction: L-threonine is first activated by ATP to form Thr-AMP and then transferred to the acceptor end of tRNA(Thr). Also edits incorrectly charged L-seryl-tRNA(Thr). The sequence is that of Threonine--tRNA ligase from Prochlorococcus marinus (strain MIT 9215).